A 588-amino-acid chain; its full sequence is Mediator of RNA polymerase II transcription subunit 26 (588 aa).

In terms of domain architecture, TFIIS N-terminal spans Gln10–Val87. Disordered stretches follow at residues Arg112–Asn393 and Lys412–Gln441. A compositionally biased stretch (basic and acidic residues) spans Ser123–Ile133. Residues Pro179–Ser191 are compositionally biased toward polar residues. Basic and acidic residues predominate over residues Ser207–Ser218. The span at Ser314–Pro325 shows a compositional bias: pro residues. Phosphoserine occurs at positions 435 and 458.

This sequence belongs to the Mediator complex subunit 26 family. In terms of assembly, component of the Mediator complex, which is composed of MED1, MED4, MED6, MED7, MED8, MED9, MED10, MED11, MED12, MED13, MED13L, MED14, MED15, MED16, MED17, MED18, MED19, MED20, MED21, MED22, MED23, MED24, MED25, MED26, MED27, MED29, MED30, MED31, CCNC, CDK8 and CDC2L6/CDK11. The MED12, MED13, CCNC and CDK8 subunits form a distinct module termed the CDK8 module. Mediator containing the CDK8 module is less active than Mediator lacking this module in supporting transcriptional activation. Individual preparations of the Mediator complex lacking one or more distinct subunits have been variously termed ARC, CRSP, DRIP, PC2, SMCC and TRAP. Interacts with CEBPB (when not methylated).

It is found in the nucleus. Its function is as follows. Component of the Mediator complex, a coactivator involved in the regulated transcription of nearly all RNA polymerase II-dependent genes. Mediator functions as a bridge to convey information from gene-specific regulatory proteins to the basal RNA polymerase II transcription machinery. Mediator is recruited to promoters by direct interactions with regulatory proteins and serves as a scaffold for the assembly of a functional pre-initiation complex with RNA polymerase II and the general transcription factors. The polypeptide is Mediator of RNA polymerase II transcription subunit 26 (Med26) (Mus musculus (Mouse)).